Here is a 256-residue protein sequence, read N- to C-terminus: Rano class II histocompatibility antigen, B alpha chain (256 aa).

The first 23 residues, 1 to 23 (MPLSRALILGVLALTTMLSPCGG), serve as a signal peptide directing secretion. An alpha-1 region spans residues 24 to 111 (QDDIEADHVG…KRSNSTPAVN (88 aa)). The Extracellular segment spans residues 24 to 218 (QDDIEADHVG…IPAPMSELTE (195 aa)). The 99-residue stretch at 108 to 206 (PAVNEVPEAT…LDEPVLRHWE (99 aa)) folds into the Ig-like C1-type domain. The tract at residues 112-205 (EVPEATVFSK…SLDEPVLRHW (94 aa)) is alpha-2. C134 and C190 are oxidised to a cystine. N145 is a glycosylation site (N-linked (GlcNAc...) asparagine). Residues 206–218 (EPEIPAPMSELTE) form a connecting peptide region. The helical transmembrane segment at 219-244 (TVVCALGLSVGLVGIVVGTIFIIQGL) threads the bilayer. Topologically, residues 245 to 256 (RSVAPSRHPGPL) are cytoplasmic.

The protein belongs to the MHC class II family.

Its subcellular location is the membrane. The chain is Rano class II histocompatibility antigen, B alpha chain (RT1-Ba) from Rattus norvegicus (Rat).